Consider the following 269-residue polypeptide: Tryptophan synthase alpha chain (269 aa).

Residues Glu49 and Asp60 each act as proton acceptor in the active site.

The protein belongs to the TrpA family. In terms of assembly, tetramer of two alpha and two beta chains.

The enzyme catalyses (1S,2R)-1-C-(indol-3-yl)glycerol 3-phosphate + L-serine = D-glyceraldehyde 3-phosphate + L-tryptophan + H2O. The protein operates within amino-acid biosynthesis; L-tryptophan biosynthesis; L-tryptophan from chorismate: step 5/5. The alpha subunit is responsible for the aldol cleavage of indoleglycerol phosphate to indole and glyceraldehyde 3-phosphate. In Actinobacillus succinogenes (strain ATCC 55618 / DSM 22257 / CCUG 43843 / 130Z), this protein is Tryptophan synthase alpha chain.